Here is a 138-residue protein sequence, read N- to C-terminus: Growth factor (138 aa).

A signal peptide spans 1-19; that stretch reads MSMKYLMLLFAAMIIRSFA. N34 carries N-linked (GlcNAc...) asparagine; by host glycosylation. The 41-residue stretch at 41–81 folds into the EGF-like domain; it reads AIRLCGPEGDGYCLHGDCIHARDIDGMYCRCSHGYTGIRCQ. 3 disulfides stabilise this stretch: C45–C58, C53–C69, and C71–C80. N-linked (GlcNAc...) asparagine; by host glycosylation occurs at N95.

This sequence belongs to the orthopoxvirus OPG019 family.

Its subcellular location is the secreted. Functionally, stimulates cellular proliferation (hyperplasia)and mobility around infected cells to promote rapid and efficient spread of infection. The polypeptide is Growth factor (OPG019) (Rabbitpox virus (strain Utrecht) (RPV)).